The chain runs to 238 residues: Probable 2-phosphosulfolactate phosphatase (238 aa).

The protein belongs to the ComB family. The cofactor is Mg(2+).

It catalyses the reaction (2R)-O-phospho-3-sulfolactate + H2O = (2R)-3-sulfolactate + phosphate. In Clostridium botulinum (strain Alaska E43 / Type E3), this protein is Probable 2-phosphosulfolactate phosphatase.